The sequence spans 160 residues: Na(+)/H(+) antiporter subunit E1 (160 aa).

4 consecutive transmembrane segments (helical) span residues 1–21, 27–47, 49–69, and 101–121; these read MAIQILVNLILSVFWLFVTGS, FILGYLFALLLVYIMRGVLPG, FYLITVYKIIKLFLVFLIELI, and WQIVLLSNLITLTPGTIVLGI.

It belongs to the CPA3 antiporters (TC 2.A.63) subunit E family. In terms of assembly, may form a heterooligomeric complex that consists of seven subunits: mnhA1, mnhB1, mnhC1, mnhD1, mnhE1, mnhF1 and mnhG1.

The protein resides in the cell membrane. In terms of biological role, mnh complex is a Na(+)/H(+) antiporter involved in Na(+) excretion. The chain is Na(+)/H(+) antiporter subunit E1 (mnhE1) from Staphylococcus saprophyticus subsp. saprophyticus (strain ATCC 15305 / DSM 20229 / NCIMB 8711 / NCTC 7292 / S-41).